The primary structure comprises 439 residues: Homogentisate 1,2-dioxygenase (439 aa).

3 residues coordinate Fe cation: H335, E341, and H371.

Belongs to the homogentisate dioxygenase family. It depends on Fe cation as a cofactor.

The catalysed reaction is homogentisate + O2 = 4-maleylacetoacetate + H(+). Its pathway is amino-acid degradation; L-phenylalanine degradation; acetoacetate and fumarate from L-phenylalanine: step 4/6. The sequence is that of Homogentisate 1,2-dioxygenase from Drosophila melanogaster (Fruit fly).